Reading from the N-terminus, the 195-residue chain is Large ribosomal subunit protein uL11m (195 aa).

It belongs to the universal ribosomal protein uL11 family. As to quaternary structure, component of the mitochondrial ribosome large subunit (39S) which comprises a 16S rRNA and about 50 distinct proteins.

It localises to the mitochondrion. The protein is Large ribosomal subunit protein uL11m (mrpl-11) of Caenorhabditis elegans.